The primary structure comprises 197 residues: Non-structural protein 5 (197 aa).

The segment covering 17 to 30 (IFKNESSSTTSTLS) has biased composition (low complexity). The segment at 17-36 (IFKNESSSTTSTLSGKSIGR) is disordered. A Phosphoserine; by host CK1 modification is found at Ser67. Asp92 serves as a coordination point for Mg(2+). Positions 131–167 (DHKKEKSKKDKSRKHYPRIEADSDSEDYVLDDSDSDD) are disordered. Residues 152–165 (DSDSEDYVLDDSDS) are compositionally biased toward acidic residues. 4 positions are modified to phosphoserine; by host: Ser153, Ser155, Ser163, and Ser165.

It belongs to the rotavirus NSP5 family. In terms of assembly, homodimer. Interacts with VP1. Interacts with VP2. Interacts with NSP2; this interaction leads to up-regulation of NSP5 hyperphosphorylation and formation of virus factories. Interacts with NSP6. Participates in the selective exclusion of host proteins from stress granules (SG) and P bodies (PB). Also participates in the sequestration of these remodeled organelles in viral factories. Mg(2+) is required as a cofactor. Post-translationally, O-glycosylated. In terms of processing, hyperphosphorylated on serine residues, when in dimeric form. Phosphorylation by host CK1 is required for the hyperphosphorylation of NSP5 dimer.

It localises to the host cytoplasm. Its function is as follows. Plays an essential role in the viral genome replication. Participates, together with NSP2, in the formation of viral factories (viroplasms), which are large inclusions in the host cytoplasm where replication intermediates are assembled and viral RNA replication takes place. Orchestrates the recruitment of viroplasmic proteins such as capsid proteins to these factories. Participates in the selective exclusion of host proteins from stress granules (SG) and P bodies (PB). Also participates in the sequestration of these remodeled organelles in viral factories. This is Non-structural protein 5 from Homo sapiens (Human).